Here is a 430-residue protein sequence, read N- to C-terminus: Adenylosuccinate synthetase (430 aa).

GTP is bound by residues 12 to 18 (GDEGKGK) and 40 to 42 (GHT). The active-site Proton acceptor is the D13. Positions 13 and 40 each coordinate Mg(2+). Residues 13–16 (DEGK), 38–41 (NAGH), T130, R144, Q224, T239, and R303 contribute to the IMP site. Catalysis depends on H41, which acts as the Proton donor. 299–305 (VNTGRKR) contributes to the substrate binding site. Residues R305, 331–333 (KLD), and 413–415 (STS) contribute to the GTP site.

Belongs to the adenylosuccinate synthetase family. In terms of assembly, homodimer. It depends on Mg(2+) as a cofactor.

It is found in the cytoplasm. The enzyme catalyses IMP + L-aspartate + GTP = N(6)-(1,2-dicarboxyethyl)-AMP + GDP + phosphate + 2 H(+). The protein operates within purine metabolism; AMP biosynthesis via de novo pathway; AMP from IMP: step 1/2. Its function is as follows. Plays an important role in the de novo pathway of purine nucleotide biosynthesis. Catalyzes the first committed step in the biosynthesis of AMP from IMP. The sequence is that of Adenylosuccinate synthetase from Rhodopseudomonas palustris (strain BisB18).